Here is a 1032-residue protein sequence, read N- to C-terminus: Integrin alpha-4 (1032 aa).

Positions 1–34 are cleaved as a signal peptide; the sequence is MIRDLGKVGKVSLLLDHIWTGILLYTVILTPADC. Residues 35–974 lie on the Extracellular side of the membrane; it reads YNIDESSPML…LHNLKPKKHV (940 aa). FG-GAP repeat units follow at residues 36 to 100, 113 to 177, 186 to 237, 238 to 291, 292 to 351, 353 to 411, and 415 to 477; these read NIDE…PNRT, KCGK…TELS, DHVR…TIKS, YVDL…EKQL, TILF…GAME, LKFE…GITP, and QRLQ…LPST. Asn81 and Asn98 each carry an N-linked (GlcNAc...) asparagine glycan. 3 cysteine pairs are disulfide-bonded: Cys91-Cys101, Cys144-Cys165, and Cys183-Cys198. A glycan (N-linked (GlcNAc...) asparagine) is linked at Asn229. The Ca(2+) site is built by Asp314, Asn316, Asp318, Leu320, Asp322, Asp376, Asp378, Asp380, Asp384, Asp438, Asp440, Asn442, Tyr444, and Asp446. N-linked (GlcNAc...) asparagine glycosylation occurs at Asn479. Cys485 and Cys494 form a disulfide bridge. N-linked (GlcNAc...) asparagine glycans are attached at residues Asn496, Asn517, Asn537, Asn626, and Asn660. 2 disulfide bridges follow: Cys500/Cys556 and Cys622/Cys627. Cysteines 698 and 712 form a disulfide. Asn746 and Asn857 each carry an N-linked (GlcNAc...) asparagine glycan. Intrachain disulfides connect Cys853/Cys889 and Cys896/Cys901. Residues 975–998 form a helical membrane-spanning segment; that stretch reads IYMIIGISLLLGILLFSLLTYILW. Over 999–1032 the chain is Cytoplasmic; it reads KVGFFRRKYQPIGTEETSRRESWNYLNKDEKEVK. Residues 1001–1005 carry the GFFKR motif motif; that stretch reads GFFRR.

The protein belongs to the integrin alpha chain family. Heterodimer of an alpha and a beta subunit.

It is found in the membrane. Fibronectin and V-CAM adhesion receptor. The polypeptide is Integrin alpha-4 (itga4) (Xenopus laevis (African clawed frog)).